A 216-amino-acid chain; its full sequence is Probable GTP-binding protein EngB (216 aa).

One can recognise an EngB-type G domain in the interval 26-200; the sequence is EGIEIAFAGR…RAKLDTWFAP (175 aa). Residues 34-41, 61-65, 79-82, 146-149, and 179-181 each bind GTP; these read GRSNAGKS, GRTQL, DLPG, TKAD, and YSS. Residues Ser-41 and Thr-63 each coordinate Mg(2+).

This sequence belongs to the TRAFAC class TrmE-Era-EngA-EngB-Septin-like GTPase superfamily. EngB GTPase family. It depends on Mg(2+) as a cofactor.

Its function is as follows. Necessary for normal cell division and for the maintenance of normal septation. This is Probable GTP-binding protein EngB from Vibrio vulnificus (strain CMCP6).